Consider the following 41-residue polypeptide: Large ribosomal subunit protein bL36 (41 aa).

Belongs to the bacterial ribosomal protein bL36 family.

In Granulibacter bethesdensis (strain ATCC BAA-1260 / CGDNIH1), this protein is Large ribosomal subunit protein bL36.